The primary structure comprises 242 residues: tRNA pseudouridine synthase A (242 aa).

The active-site Nucleophile is the aspartate 51. Tyrosine 107 is a substrate binding site.

The protein belongs to the tRNA pseudouridine synthase TruA family. In terms of assembly, homodimer.

The enzyme catalyses uridine(38/39/40) in tRNA = pseudouridine(38/39/40) in tRNA. In terms of biological role, formation of pseudouridine at positions 38, 39 and 40 in the anticodon stem and loop of transfer RNAs. This is tRNA pseudouridine synthase A from Helicobacter pylori (strain ATCC 700392 / 26695) (Campylobacter pylori).